Here is a 770-residue protein sequence, read N- to C-terminus: Arf-GAP with coiled-coil, ANK repeat and PH domain-containing protein 2 (770 aa).

The BAR domain maps to 1 to 226 (MKMTVDFEEC…MKDLGAQLDR (226 aa)). The region spanning 266–361 (GIVMEGYLFK…WIKAVQTSIA (96 aa)) is the PH domain. A disordered region spans residues 371–391 (SEKLDKKSSPSTGSLDSGNES). The span at 379–388 (SPSTGSLDSG) shows a compositional bias: polar residues. Residues Ser-384 and Ser-387 each carry the phosphoserine modification. An Arf-GAP domain is found at 399–520 (ESALQRVQCI…KFVDKYSALL (122 aa)). Residues 414–437 (CCDCGLADPRWASINLGITLCIEC) form a C4-type zinc finger. The residue at position 521 (Ser-521) is a Phosphoserine. The tract at residues 542–572 (ARASVHTPVKSNDSGIQQCSEDGRESLPSTV) is disordered. A compositionally biased stretch (polar residues) spans 550–561 (VKSNDSGIQQCS). Phosphoserine is present on residues Ser-573 and Ser-576. ANK repeat units follow at residues 632-661 (NQAT…NVNQ), 665-694 (QGRG…NQHA), and 698-727 (EGKD…NEEM). Position 734 is a phosphotyrosine (Tyr-734). Residue Ser-767 is modified to Phosphoserine.

Interacts with RAB35 (GTP-bound form); the interaction is direct and probably recruits ACAP2 to membranes. Interacts with MICALL1; the interaction is indirect through RAB35.

The protein resides in the endosome membrane. Its subcellular location is the cell membrane. Its activity is regulated as follows. GAP activity stimulated by phosphatidylinositol 4,5-bisphosphate (PIP2) and phosphatidic acid. Its function is as follows. GTPase-activating protein (GAP) for ADP ribosylation factor 6 (ARF6). Doesn't show GAP activity for RAB35. The protein is Arf-GAP with coiled-coil, ANK repeat and PH domain-containing protein 2 (Acap2) of Mus musculus (Mouse).